The chain runs to 422 residues: Inner membrane ALBINO3-like protein 2, chloroplastic (422 aa).

Residues 1–10 (MALQMKQSPS) show a composition bias toward polar residues. The interval 1 to 22 (MALQMKQSPSMGVRRASQPVLP) is disordered. Residues 65–85 (LYTLAEGGPIDVLAQFFEFVL) traverse the membrane as a helical segment. The Stromal segment spans residues 86–96 (QTLDEGLESAK). A helical transmembrane segment spans residues 97-117 (IPYSYGFAIIALTVLVKVATF). At 118–166 (PLTQKQVESTLSLQALQPRVKELQAKYADDPENLQLETARLYKEAGVNP) the chain is on the lumenal side. A helical transmembrane segment spans residues 167–187 (LAGCFPTLATIPVFIGLYNAL). The Stromal portion of the chain corresponds to 188–225 (SNAAKEGLLTEGFFWIPSLGGPTTIGGGLEWLVPFENG). The chain crosses the membrane as a helical span at residues 226–246 (APPVGWANAAAYLVMPVLLVA). Topologically, residues 247-275 (SQYASQKIISSQNNQDPSQQQAQAILKFL) are lumenal. The helical transmembrane segment at 276–296 (PLMIGWFSLNVPSGLTLYWFV) threads the bilayer. Over 297-422 (NNLLSTGQQL…GSEEGKDNSA (126 aa)) the chain is Stromal. Residues 325–422 (TAGSSTPIVK…GSEEGKDNSA (98 aa)) form a disordered region. Residues 334-350 (KPKEERVKKVTGKELGS) are compositionally biased toward basic and acidic residues. A compositionally biased stretch (acidic residues) spans 358–367 (DGEEVEDVEV). Low complexity predominate over residues 368–380 (EVVSSGSSSSSGS). Basic and acidic residues predominate over residues 386–400 (RKGEKFRALKAREAA).

This sequence belongs to the OXA1/ALB3/YidC (TC 2.A.9.2) family.

Its subcellular location is the plastid. It is found in the chloroplast thylakoid membrane. In terms of biological role, required for the insertion of some light-harvesting complexes (LHC) proteins into the chloroplast thylakoid membrane. Essential for the assembly and activity of LHC I and II. Its function is probably partly distinct from that of ALB3.1. The sequence is that of Inner membrane ALBINO3-like protein 2, chloroplastic (ALB3.2) from Chlamydomonas reinhardtii (Chlamydomonas smithii).